The following is a 261-amino-acid chain: Thiamine thiazole synthase (261 aa).

NAD(+)-binding positions include S40, 59–60 (ER), G67, V133, and 159–161 (HID). Fe cation is bound by residues D161 and H176. Positions 179 and 226 each coordinate NAD(+). Glycine is bound at residue R236.

The protein belongs to the THI4 family. As to quaternary structure, homooctamer; tetramer of dimers. The cofactor is Fe(2+).

The catalysed reaction is hydrogen sulfide + glycine + NAD(+) = ADP-5-ethyl-4-methylthiazole-2-carboxylate + nicotinamide + 3 H2O + H(+). Its pathway is cofactor biosynthesis; thiamine diphosphate biosynthesis. Functionally, involved in the biosynthesis of the thiazole moiety of thiamine. Catalyzes the conversion of NAD and glycine to adenosine diphosphate 5-(2-hydroxyethyl)-4-methylthiazole-2-carboxylate (ADT), an adenylated thiazole intermediate, using free sulfide as a source of sulfur. This is Thiamine thiazole synthase from Methanococcus maripaludis (strain C5 / ATCC BAA-1333).